The following is a 672-amino-acid chain: Flap endonuclease 1 (672 aa).

The segment at 1 to 106 (MGIKGLTKFI…SELEKRGEKR (106 aa)) is N-domain. Asp-34 contacts Mg(2+). The DNA site is built by Arg-47 and Arg-72. Mg(2+)-binding residues include Asp-88, Glu-160, Glu-162, Asp-181, and Asp-183. The interval 124–266 (EIKKQSGRTV…KTAYNLIKEY (143 aa)) is I-domain. A DNA-binding site is contributed by Glu-160. DNA-binding residues include Gly-244 and Asp-246. Asp-246 contributes to the Mg(2+) binding site. The interaction with PCNA stretch occupies residues 349-357 (TQRRLDNFF). The disordered stretch occupies residues 371 to 610 (ETKKEQTLPA…EDSPNSYNNI (240 aa)). Composition is skewed to basic and acidic residues over residues 413-493 (MKEE…KKSL), 502-526 (DSDK…EKIN), and 535-548 (DHSR…KDNI). A compositionally biased stretch (low complexity) spans 549 to 584 (SDINNNNNNNNSSSNNNNISNNHFNSVSSNSTFNSS). A compositionally biased stretch (basic and acidic residues) spans 587 to 603 (LKSEDTLKSNSPLKEDS).

It belongs to the XPG/RAD2 endonuclease family. FEN1 subfamily. As to quaternary structure, interacts with PCNA1 and PCNA2. Three molecules of FEN1 bind to one PCNA trimer with each molecule binding to one PCNA monomer. PCNA stimulates the nuclease activity without altering cleavage specificity. Requires Mg(2+) as cofactor. In terms of processing, phosphorylated. Phosphorylation upon DNA damage induces relocalization to the nuclear plasma.

It is found in the nucleus. The protein localises to the nucleolus. The protein resides in the nucleoplasm. It localises to the mitochondrion. Its function is as follows. Structure-specific nuclease with 5'-flap endonuclease and 5'-3' exonuclease activities involved in DNA replication and repair. During DNA replication, cleaves the 5'-overhanging flap structure that is generated by displacement synthesis when DNA polymerase encounters the 5'-end of a downstream Okazaki fragment. It enters the flap from the 5'-end and then tracks to cleave the flap base, leaving a nick for ligation. Also involved in the long patch base excision repair (LP-BER) pathway, by cleaving within the apurinic/apyrimidinic (AP) site-terminated flap. Acts as a genome stabilization factor that prevents flaps from equilibrating into structures that lead to duplications and deletions. Also possesses 5'-3' exonuclease activity on nicked or gapped double-stranded DNA, and exhibits RNase H activity. Also involved in replication and repair of rDNA and in repairing mitochondrial DNA. This chain is Flap endonuclease 1, found in Plasmodium falciparum (isolate 3D7).